Consider the following 114-residue polypeptide: Non-specific lipid-transfer protein 1 (114 aa).

An N-terminal signal peptide occupies residues Met-1–Ala-25. 4 disulfide bridges follow: Cys-29–Cys-76, Cys-39–Cys-53, Cys-54–Cys-99, and Cys-74–Cys-113.

The protein belongs to the plant LTP family. In terms of tissue distribution, expressed in seeds and, at very low levels, in pulp of fruit (at protein level).

Its function is as follows. Plant non-specific lipid-transfer proteins transfer phospholipids as well as galactolipids across membranes. May play a role in wax or cutin deposition in the cell walls of expanding epidermal cells and certain secretory tissues. The protein is Non-specific lipid-transfer protein 1 of Actinidia chinensis var. chinensis (Chinese soft-hair kiwi).